We begin with the raw amino-acid sequence, 154 residues long: Large ribosomal subunit protein uL15 (154 aa).

A disordered region spans residues 1 to 54 (MKLHDLTPAPGSRKPKKRVGRGPGGTDKTAGRGHKGQKSRSGAGKGPFFEGGRS).

It belongs to the universal ribosomal protein uL15 family. Part of the 50S ribosomal subunit.

In terms of biological role, binds to the 23S rRNA. The sequence is that of Large ribosomal subunit protein uL15 from Deinococcus geothermalis (strain DSM 11300 / CIP 105573 / AG-3a).